A 106-amino-acid chain; its full sequence is ATP-dependent Clp protease adapter protein ClpS (106 aa).

The protein belongs to the ClpS family. Binds to the N-terminal domain of the chaperone ClpA.

Its function is as follows. Involved in the modulation of the specificity of the ClpAP-mediated ATP-dependent protein degradation. The chain is ATP-dependent Clp protease adapter protein ClpS from Pseudoalteromonas atlantica (strain T6c / ATCC BAA-1087).